Here is a 738-residue protein sequence, read N- to C-terminus: Protostadienol synthase A (738 aa).

Residues 132 to 173 (KQEMCRYLLNVVNEDGGWGLFIQSPSTVFGTVMNYCMLRILG) form a PFTB 1 repeat. Aspartate 463 (proton donor) is an active-site residue. 3 PFTB repeats span residues 490-531 (LQQA…YENV), 567-607 (VSRS…ACMG), and 616-663 (CQRA…AVIG).

The protein belongs to the terpene cyclase/mutase family.

It carries out the reaction (S)-2,3-epoxysqualene = (17Z)-protosta-17(20),24-dien-3beta-ol. In terms of biological role, protostadienol synthase which cyclizes (3S)-oxidosqualene to (17Z)-protosta-17(20),24-dien-3-beta-ol (protostadienol), the biosynthetic precursor of helvolic acid, a secondary metabolite which promotes virulence. This Neosartorya fischeri (strain ATCC 1020 / DSM 3700 / CBS 544.65 / FGSC A1164 / JCM 1740 / NRRL 181 / WB 181) (Aspergillus fischerianus) protein is Protostadienol synthase A (pdsA).